A 359-amino-acid polypeptide reads, in one-letter code: Methyltransferase eqxD (359 aa).

S-adenosyl-L-methionine-binding positions include 198-199, aspartate 224, 248-249, arginine 264, and arginine 265; these read GG and SF.

The protein belongs to the class I-like SAM-binding methyltransferase superfamily. Cation-independent O-methyltransferase family.

It catalyses the reaction trichosetin + S-adenosyl-L-methionine = equisetin + S-adenosyl-L-homocysteine + H(+). It functions in the pathway mycotoxin biosynthesis. In terms of biological role, methyltransferase; part of the gene cluster that mediates the biosynthesis of equisetin, a trans-fused decalin-containing tetramic acid with antimicrobial activity. The PKS module of eqxS together with the enoylreductase eqxC catalyze the formation of the polyketide unit which is then conjugated to L-serine by the condensation domain of the eqxS NRPS module. Activity of the Dieckmann cyclase domain (RED) results in release of the Dieckmann product intermediate. Diels-Alderase eqx3 is involved in endo-selective Diels-Alder cycloaddition to form the decalin ring, leading to the production of N-desmethylequisetin also called trichosetin. Subsequent N-methylation is carried out by eqxD to give equisetin. The sequence is that of Methyltransferase eqxD from Fusarium heterosporum.